We begin with the raw amino-acid sequence, 433 residues long: Probable imidazolonepropionase (433 aa).

Residues Tyr160 and His193 each coordinate 4-imidazolone-5-propanoate. Tyr160 provides a ligand contact to N-formimidoyl-L-glutamate. His261 contacts Fe(3+). His261 serves as a coordination point for Zn(2+). Glu264 lines the 4-imidazolone-5-propanoate pocket. Asp335 serves as a coordination point for Fe(3+). A Zn(2+)-binding site is contributed by Asp335. Asn337 contacts N-formimidoyl-L-glutamate.

Belongs to the metallo-dependent hydrolases superfamily. HutI family. It depends on Zn(2+) as a cofactor. Fe(3+) serves as cofactor.

The enzyme catalyses 4-imidazolone-5-propanoate + H2O = N-formimidoyl-L-glutamate. It functions in the pathway amino-acid degradation; L-histidine degradation into L-glutamate; N-formimidoyl-L-glutamate from L-histidine: step 3/3. This is Probable imidazolonepropionase (amdhd1) from Danio rerio (Zebrafish).